Consider the following 883-residue polypeptide: DNA mismatch repair protein MutS (883 aa).

633-640 serves as a coordination point for ATP; sequence GPNMGGKS.

It belongs to the DNA mismatch repair MutS family.

In terms of biological role, this protein is involved in the repair of mismatches in DNA. It is possible that it carries out the mismatch recognition step. This protein has a weak ATPase activity. The chain is DNA mismatch repair protein MutS from Bordetella pertussis (strain Tohama I / ATCC BAA-589 / NCTC 13251).